Consider the following 521-residue polypeptide: Vang-like protein 2 (521 aa).

The tract at residues methionine 1 to histidine 81 is disordered. The Cytoplasmic portion of the chain corresponds to methionine 1–glycine 108. Residues glycine 15–lysine 33 show a composition bias toward basic residues. The span at glutamate 57–asparagine 67 shows a compositional bias: basic and acidic residues. Over residues glycine 69–histidine 81 the composition is skewed to low complexity. A helical membrane pass occupies residues valine 109–leucine 129. The Extracellular portion of the chain corresponds to proline 130 to glycine 147. A helical transmembrane segment spans residues leucine 148–phenylalanine 168. Over arginine 169–valine 178 the chain is Cytoplasmic. Residues phenylalanine 179–phenylalanine 199 traverse the membrane as a helical segment. At tyrosine 200–tyrosine 218 the chain is on the extracellular side. Residues alanine 219–leucine 239 traverse the membrane as a helical segment. Over arginine 240–valine 521 the chain is Cytoplasmic. Residues glutamate 518 to valine 521 carry the PDZ-binding motif.

The protein belongs to the Vang family. Interacts with dvl/dsh. Interacts with prickle3.

It is found in the cell membrane. In terms of biological role, has a role in non-canonical Wnt/planar cell polarity (PCP) signaling; can recruit dvl/dsh and prickle from the cytoplasm to the plasma membrane. Acts in a PCP complex to regulate the polarized assembly of fibronectrin on the surface of the mesoderm during gastrulation. Regulates convergent extension in both dorsal mesoderm and neural tissue without affecting cell fate. Regulates neural fold closure during neurulation. May be required for cell surface localization of fzd3 and fzd6 in the inner ear. In Xenopus tropicalis (Western clawed frog), this protein is Vang-like protein 2.